Consider the following 139-residue polypeptide: Holo-[acyl-carrier-protein] synthase (139 aa).

Positions 8 and 61 each coordinate Mg(2+).

The protein belongs to the P-Pant transferase superfamily. AcpS family. It depends on Mg(2+) as a cofactor.

The protein resides in the cytoplasm. The enzyme catalyses apo-[ACP] + CoA = holo-[ACP] + adenosine 3',5'-bisphosphate + H(+). Functionally, transfers the 4'-phosphopantetheine moiety from coenzyme A to a Ser of acyl-carrier-protein. This chain is Holo-[acyl-carrier-protein] synthase, found in Rhodopseudomonas palustris (strain BisB5).